Reading from the N-terminus, the 188-residue chain is Mitochondrial import inner membrane translocase subunit Tim23B (188 aa).

2 consecutive transmembrane segments (helical) span residues 73-93 (FELA…FGAM) and 125-145 (ALWA…GVII).

The protein belongs to the Tim17/Tim22/Tim23 family.

It localises to the mitochondrion inner membrane. In terms of biological role, may participate in the translocation of transit peptide-containing proteins across the mitochondrial inner membrane. the PAM complex. This chain is Mitochondrial import inner membrane translocase subunit Tim23B, found in Homo sapiens (Human).